Here is a 208-residue protein sequence, read N- to C-terminus: Uracil phosphoribosyltransferase (208 aa).

5-phospho-alpha-D-ribose 1-diphosphate contacts are provided by residues Arg78, Arg103, and 130–138 (DPMFATGGT). Residues Ile193 and 198 to 200 (GDA) each bind uracil. Asp199 is a 5-phospho-alpha-D-ribose 1-diphosphate binding site.

The protein belongs to the UPRTase family. Requires Mg(2+) as cofactor.

It catalyses the reaction UMP + diphosphate = 5-phospho-alpha-D-ribose 1-diphosphate + uracil. It functions in the pathway pyrimidine metabolism; UMP biosynthesis via salvage pathway; UMP from uracil: step 1/1. With respect to regulation, allosterically activated by GTP. Catalyzes the conversion of uracil and 5-phospho-alpha-D-ribose 1-diphosphate (PRPP) to UMP and diphosphate. The sequence is that of Uracil phosphoribosyltransferase from Campylobacter jejuni (strain RM1221).